A 361-amino-acid polypeptide reads, in one-letter code: Phenylalanine--tRNA ligase alpha subunit (361 aa).

Mg(2+) is bound at residue Glu260.

Belongs to the class-II aminoacyl-tRNA synthetase family. Phe-tRNA synthetase alpha subunit type 1 subfamily. As to quaternary structure, tetramer of two alpha and two beta subunits. Mg(2+) is required as a cofactor.

The protein localises to the cytoplasm. The catalysed reaction is tRNA(Phe) + L-phenylalanine + ATP = L-phenylalanyl-tRNA(Phe) + AMP + diphosphate + H(+). This chain is Phenylalanine--tRNA ligase alpha subunit, found in Bartonella quintana (strain Toulouse) (Rochalimaea quintana).